A 394-amino-acid chain; its full sequence is Ceramide synthase 4 (394 aa).

The Lumenal segment spans residues 1–31 (MLSSFNEWFWQDRFWLPPNVTWTELEDRDGR). Asn-19 is a glycosylation site (N-linked (GlcNAc...) asparagine). The helical transmembrane segment at 32 to 52 (VYPHPQDLLAALPLALVLLAM) threads the bilayer. A homeobox-like region spans residues 67-128 (WLGVRDQTRR…RRRRNQDRPQ (62 aa)). Residues 131–332 (KKFCEASWRF…ILRMLYSFMK (202 aa)) enclose the TLC domain. 4 consecutive transmembrane segments (helical) span residues 140–160 (FLFYLSSFVGGLSVLYHESWL), 179–199 (LYWWYLLELGFYLSLLIRLPF), 209–229 (QVIHHFVAVILMTFSYSANLL), and 260–280 (VCDALFLIFSFVFFYTRLVLF). Residues 291 to 301 (ESISNRGPFFG) carry the Last loop motif motif. The chain crosses the membrane as a helical span at residues 304-324 (FFNGLLMLLQLLHVFWSCLIL). Residues 325 to 394 (RMLYSFMKKG…RLTNRHTTAT (70 aa)) are Cytoplasmic-facing. Positions 341 to 394 (RSDVEESDSSEEAAAAQEPLQLKNGAAGGPRPAPTDGPRSRVAGRLTNRHTTAT) are disordered. A phosphoserine mark is found at Ser-342, Ser-349, and Ser-350.

In terms of processing, phosphorylated at the C-terminus by CK2. Post-translationally, N-glycosylated.

The protein resides in the endoplasmic reticulum membrane. The catalysed reaction is sphinganine + octadecanoyl-CoA = N-(octadecanoyl)-sphinganine + CoA + H(+). It catalyses the reaction eicosanoyl-CoA + sphinganine = N-eicosanoylsphinganine + CoA + H(+). It carries out the reaction docosanoyl-CoA + sphinganine = N-docosanoylsphinganine + CoA + H(+). The enzyme catalyses tetracosanoyl-CoA + sphinganine = N-tetracosanoylsphinganine + CoA + H(+). The catalysed reaction is hexacosanoyl-CoA + sphinganine = N-hexacosanoylsphinganine + CoA + H(+). It catalyses the reaction a fatty acyl-CoA + sphing-4-enine = an N-acylsphing-4-enine + CoA + H(+). It carries out the reaction sphing-4-enine + octadecanoyl-CoA = N-octadecanoylsphing-4-enine + CoA + H(+). The enzyme catalyses hexadecasphinganine + octadecanoyl-CoA = N-octadecanoylhexadecasphinganine + CoA + H(+). It functions in the pathway lipid metabolism; sphingolipid metabolism. In terms of biological role, ceramide synthase that catalyzes formation of ceramide from sphinganine and acyl-CoA substrates, with high selectivity toward long and very-long chains (C18:0-C22:0) as acyl donor. The chain is Ceramide synthase 4 from Homo sapiens (Human).